The primary structure comprises 280 residues: Phosphatidylglycerol--prolipoprotein diacylglyceryl transferase (280 aa).

4 helical membrane passes run Phe-12–Leu-32, Leu-52–Glu-72, Ile-86–Leu-106, and Phe-115–Gly-133. Residue Arg-134 coordinates a 1,2-diacyl-sn-glycero-3-phospho-(1'-sn-glycerol). The next 3 helical transmembrane spans lie at Pro-173 to Phe-193, Leu-203 to Ile-223, and Ile-246 to Tyr-266.

It belongs to the Lgt family.

The protein resides in the cell inner membrane. It carries out the reaction L-cysteinyl-[prolipoprotein] + a 1,2-diacyl-sn-glycero-3-phospho-(1'-sn-glycerol) = an S-1,2-diacyl-sn-glyceryl-L-cysteinyl-[prolipoprotein] + sn-glycerol 1-phosphate + H(+). It participates in protein modification; lipoprotein biosynthesis (diacylglyceryl transfer). In terms of biological role, catalyzes the transfer of the diacylglyceryl group from phosphatidylglycerol to the sulfhydryl group of the N-terminal cysteine of a prolipoprotein, the first step in the formation of mature lipoproteins. This is Phosphatidylglycerol--prolipoprotein diacylglyceryl transferase from Synechococcus sp. (strain CC9902).